Here is a 433-residue protein sequence, read N- to C-terminus: Phosphomethylpyrimidine synthase (433 aa).

Substrate-binding positions include asparagine 66, methionine 94, tyrosine 123, histidine 162, 184–186, 225–228, and glutamate 264; these read SRG and DALR. Position 268 (histidine 268) interacts with Zn(2+). Tyrosine 291 is a substrate binding site. Residue histidine 332 participates in Zn(2+) binding. Residues cysteine 408, cysteine 411, and cysteine 415 each contribute to the [4Fe-4S] cluster site.

The protein belongs to the ThiC family. Requires [4Fe-4S] cluster as cofactor.

It catalyses the reaction 5-amino-1-(5-phospho-beta-D-ribosyl)imidazole + S-adenosyl-L-methionine = 4-amino-2-methyl-5-(phosphooxymethyl)pyrimidine + CO + 5'-deoxyadenosine + formate + L-methionine + 3 H(+). The protein operates within cofactor biosynthesis; thiamine diphosphate biosynthesis. In terms of biological role, catalyzes the synthesis of the hydroxymethylpyrimidine phosphate (HMP-P) moiety of thiamine from aminoimidazole ribotide (AIR) in a radical S-adenosyl-L-methionine (SAM)-dependent reaction. The chain is Phosphomethylpyrimidine synthase from Saccharolobus islandicus (strain M.16.27) (Sulfolobus islandicus).